We begin with the raw amino-acid sequence, 221 residues long: Probable septum site-determining protein MinC (221 aa).

This sequence belongs to the MinC family. As to quaternary structure, interacts with MinD and FtsZ.

Functionally, cell division inhibitor that blocks the formation of polar Z ring septums. Rapidly oscillates between the poles of the cell to destabilize FtsZ filaments that have formed before they mature into polar Z rings. Prevents FtsZ polymerization. This is Probable septum site-determining protein MinC from Shewanella baltica (strain OS223).